Consider the following 116-residue polypeptide: UPF0482 protein ECA2253 (116 aa).

Positions 1–31 (MNHYSFSSLIRALIPLSLVIVSAVWQPAALA) are cleaved as a signal peptide.

The protein belongs to the UPF0482 family.

In Pectobacterium atrosepticum (strain SCRI 1043 / ATCC BAA-672) (Erwinia carotovora subsp. atroseptica), this protein is UPF0482 protein ECA2253.